We begin with the raw amino-acid sequence, 897 residues long: Serine/threonine-protein kinase ATG1 (897 aa).

The Protein kinase domain occupies Tyr24–Val325. Residues Ile30–Val38 and Lys54 contribute to the ATP site. Phosphoserine is present on Ser34. Phosphothreonine is present on Thr129. The active-site Proton acceptor is the Asp172. Thr226 carries the phosphothreonine; by autocatalysis modification. Residues Ser304, Ser365, and Ser390 each carry the phosphoserine modification. The LIR motif lies at Tyr429–Val432. The disordered stretch occupies residues Leu490–Leu509. Ser508 and Ser515 each carry phosphoserine; by PKA. Phosphoserine occurs at positions 533, 551, and 552. Thr590 carries the phosphothreonine modification. Residues Ser621, Ser635, Ser638, Ser647, Ser677, Ser680, Ser683, Ser769, and Ser783 each carry the phosphoserine modification. A required for Cvt trafficking region spans residues Asp880–Leu886.

This sequence belongs to the protein kinase superfamily. Ser/Thr protein kinase family. APG1/unc-51/ULK1 subfamily. In terms of assembly, homodimer. Dimerization requires the presence of ATG13. Forms a ternary complex with ATG13 and ATG17. Also interacts with ATG11. Post-translationally, autophosphorylated at Thr-226 and Ser-390. The phosphorylation state may play a role in the induction of protein degradation upon starvation. Phosphorylation at Thr-226 within the activation loop is required for protein kinase activity whereas phosphorylation at Ser-34 leads to inhibition of kinase activity. Phosphorylation of Ser-508 and Ser-515 by PKA is required to induce autophagy but not for kinase activity.

The protein localises to the cytoplasm. It localises to the preautophagosomal structure membrane. The enzyme catalyses L-seryl-[protein] + ATP = O-phospho-L-seryl-[protein] + ADP + H(+). It catalyses the reaction L-threonyl-[protein] + ATP = O-phospho-L-threonyl-[protein] + ADP + H(+). Its activity is regulated as follows. Activated by hypophosphorylated form of ATG13 (present in nitrogen starvation conditions). Also activated by autophopsphorylation of Thr-226 and inhibited by phosphorylation of Ser-34. Its function is as follows. Serine/threonine protein kinase involved in the cytoplasm to vacuole transport (Cvt) and found to be essential in autophagy, where it is required for the formation of autophagosomes. Involved in the clearance of protein aggregates which cannot be efficiently cleared by the proteasome. Required for selective autophagic degradation of the nucleus (nucleophagy) as well as for mitophagy which contributes to regulate mitochondrial quantity and quality by eliminating the mitochondria to a basal level to fulfill cellular energy requirements and preventing excess ROS production. Also involved in endoplasmic reticulum-specific autophagic process, in selective removal of ER-associated degradation (ERAD) substrates. Plays a key role in ATG9 and ATG23 cycling through the pre-autophagosomal structure and is necessary to promote ATG18 binding to ATG9 through phosphorylation of ATG9. Catalyzes phosphorylation of ATG4, decreasing the interaction between ATG4 and ATG8 and impairing deconjugation of PE-conjugated forms of ATG8. Finally, ATG1 is also required for the maintenance of cell viability under starvation and for glycogen storage during stationary phase. Plays a role in genome stability through suppression of abnormal mitosis under starvation, and in regulation of filamentous growth. The protein is Serine/threonine-protein kinase ATG1 of Saccharomyces cerevisiae (strain YJM789) (Baker's yeast).